Reading from the N-terminus, the 196-residue chain is Peptide methionine sulfoxide reductase MsrA 2 (196 aa).

Cysteine 36 is an active-site residue.

The protein belongs to the MsrA Met sulfoxide reductase family.

It catalyses the reaction L-methionyl-[protein] + [thioredoxin]-disulfide + H2O = L-methionyl-(S)-S-oxide-[protein] + [thioredoxin]-dithiol. The enzyme catalyses [thioredoxin]-disulfide + L-methionine + H2O = L-methionine (S)-S-oxide + [thioredoxin]-dithiol. Has an important function as a repair enzyme for proteins that have been inactivated by oxidation. Catalyzes the reversible oxidation-reduction of methionine sulfoxide in proteins to methionine. This is Peptide methionine sulfoxide reductase MsrA 2 (msrA2) from Caulobacter vibrioides (strain ATCC 19089 / CIP 103742 / CB 15) (Caulobacter crescentus).